Here is a 113-residue protein sequence, read N- to C-terminus: Hydrogenase maturation factor HypA (113 aa).

Position 2 (H2) interacts with Ni(2+). C73, C76, C89, and C92 together coordinate Zn(2+).

Belongs to the HypA/HybF family.

Involved in the maturation of [NiFe] hydrogenases. Required for nickel insertion into the metal center of the hydrogenase. This is Hydrogenase maturation factor HypA from Rhodobacter capsulatus (Rhodopseudomonas capsulata).